We begin with the raw amino-acid sequence, 414 residues long: MRTERVSPLLALGILVAGLCSRVHCLPENVTPEEQHKVTSVDGHSLASSNTDFAFSLYKQLALKDPNKNVIFSPLSVSIALAFLSLGAHGPTVTEILEGLKFNLTETPETEIHQGFQHLLQTFNQPSNQLQLSVGNAIFVQEELKLLDKFIEDARVLYSSEAFPTNFRDPEAAKSLINDYVKNKTQGKIEELFKDLSPRTELVLVNYVYFKAQWKTRFDPKHTEKTEFHVSDNKTVEVPMMTLDLETPYFRDEELGCTLVELTYTSNDSALFILPDKGKMQDLEAKLTPEMLTRWRNSLQPRRIHELYLPKFSIKSNYELNDTLSQMGIKKIFTDADLSGITGTADLVVSQVVHGAALDVDEEGTEGAAATGIGIERTFLRIIVRVNRPFLIAVVLKDTQSIIFLGKVTNPSEA.

A signal peptide spans 1–25 (MRTERVSPLLALGILVAGLCSRVHC). N-linked (GlcNAc...) asparagine glycosylation is found at Asn103, Asn183, Asn233, Asn267, and Asn321.

Belongs to the serpin family. In terms of assembly, homodimer.

It is found in the cytoplasmic vesicle. It localises to the secretory vesicle. Its subcellular location is the chromaffin granule. The protein localises to the secreted. Functionally, serine protease inhibitor. The sequence is that of Serpin A3-6 from Bos taurus (Bovine).